Reading from the N-terminus, the 331-residue chain is DSC E3 ubiquitin ligase complex subunit D (331 aa).

Residue asparagine 26 is glycosylated (N-linked (GlcNAc...) asparagine). The next 3 membrane-spanning stretches (helical) occupy residues isoleucine 63–alanine 83, proline 107–threonine 127, and leucine 159–glutamate 179. Positions serine 188–glutamate 225 are disordered. The segment covering arginine 196–serine 214 has biased composition (basic and acidic residues).

In terms of assembly, component of the DSC E3 ubiquitin ligase complex composed of dscA, dscB, dscC and dscD.

The protein localises to the endoplasmic reticulum membrane. It participates in protein modification; protein ubiquitination. Component of the DSC E3 ubiquitin ligase complex which is required for the srbA transcriptional activator proteolytic cleavage to release the soluble transcription factor from the membrane in low oxygen or sterol conditions. Required for growth during hypoxia and triazole drug susceptibility, as well as for virulence in a murine model of invasive pulmonary aspergillosis (IPA). In Aspergillus fumigatus (strain ATCC MYA-4609 / CBS 101355 / FGSC A1100 / Af293) (Neosartorya fumigata), this protein is DSC E3 ubiquitin ligase complex subunit D.